A 72-amino-acid chain; its full sequence is Translation initiation factor IF-1 (72 aa).

The S1-like domain occupies M1–K72.

It belongs to the IF-1 family. As to quaternary structure, component of the 30S ribosomal translation pre-initiation complex which assembles on the 30S ribosome in the order IF-2 and IF-3, IF-1 and N-formylmethionyl-tRNA(fMet); mRNA recruitment can occur at any time during PIC assembly.

Its subcellular location is the cytoplasm. Its function is as follows. One of the essential components for the initiation of protein synthesis. Stabilizes the binding of IF-2 and IF-3 on the 30S subunit to which N-formylmethionyl-tRNA(fMet) subsequently binds. Helps modulate mRNA selection, yielding the 30S pre-initiation complex (PIC). Upon addition of the 50S ribosomal subunit IF-1, IF-2 and IF-3 are released leaving the mature 70S translation initiation complex. The sequence is that of Translation initiation factor IF-1 from Staphylococcus aureus (strain USA300 / TCH1516).